Reading from the N-terminus, the 315-residue chain is Olfactory receptor 4K3 (315 aa).

Over Met1–Ile25 the chain is Extracellular. N-linked (GlcNAc...) asparagine glycosylation is present at Asn5. A helical membrane pass occupies residues Phe26–Ile49. Residues Ala50 to Ser57 lie on the Cytoplasmic side of the membrane. A helical membrane pass occupies residues Pro58 to Pro79. Residues Lys80 to Gln100 are Extracellular-facing. Cys97 and Cys189 are joined by a disulfide. A helical membrane pass occupies residues Met101–Phe120. At Asp121–Arg139 the chain is on the cytoplasmic side. Residues Met140–Ser158 form a helical membrane-spanning segment. Over Gln159–Leu195 the chain is Extracellular. A helical membrane pass occupies residues Gly196–Thr219. At Ile220–Lys235 the chain is on the cytoplasmic side. Residues Ala236–Tyr258 traverse the membrane as a helical segment. The Extracellular portion of the chain corresponds to Val259–Lys269. A helical membrane pass occupies residues Val270–Val289. Topologically, residues Arg290–Pro315 are cytoplasmic.

This sequence belongs to the G-protein coupled receptor 1 family.

The protein resides in the cell membrane. Its function is as follows. Odorant receptor. The protein is Olfactory receptor 4K3 (OR4K3) of Homo sapiens (Human).